Here is a 771-residue protein sequence, read N- to C-terminus: Chaperone protein dnaK3 (771 aa).

Threonine 198 is modified (phosphothreonine; by autocatalysis). The interval phenylalanine 624–phenylalanine 771 is disordered. Composition is skewed to basic and acidic residues over residues tyrosine 630–aspartate 652 and tyrosine 708–alanine 734.

Belongs to the heat shock protein 70 family.

Its function is as follows. Acts as a chaperone. In Synechocystis sp. (strain ATCC 27184 / PCC 6803 / Kazusa), this protein is Chaperone protein dnaK3 (dnaK3).